The following is a 772-amino-acid chain: Mitochondrial intermediate peptidase (772 aa).

Residues 1–37 constitute a mitochondrion transit peptide; sequence MLRTIILKAGSNASIPSLSRQNKLLRFFATAGAVSRT. His558 provides a ligand contact to Zn(2+). Glu559 is an active-site residue. The Zn(2+) site is built by His562 and His565.

Belongs to the peptidase M3 family. It depends on Zn(2+) as a cofactor.

It is found in the mitochondrion matrix. The enzyme catalyses Release of an N-terminal octapeptide as second stage of processing of some proteins imported into the mitochondrion.. Its activity is regulated as follows. Stimulated by Fe(2+). Its function is as follows. Cleaves proteins, imported into the mitochondrion, to their mature size. While most mitochondrial precursor proteins are processed to the mature form in one step by mitochondrial processing peptidase (MPP), the sequential cleavage by MIP of an octapeptide after initial processing by MPP is a required step for a subgroup of nuclear-encoded precursor proteins destined for the matrix or the inner membrane. Cleaves precursor proteins of respiratory components, including subunits of the electron transport chain and tricarboxylic acid cycle enzymes, and components of the mitochondrial genetic machinery, including ribosomal proteins, translation factors, and proteins required for mitochondrial DNA metabolism. The protein is Mitochondrial intermediate peptidase (OCT1) of Saccharomyces cerevisiae (strain YJM789) (Baker's yeast).